An 88-amino-acid chain; its full sequence is Small ribosomal subunit protein uS17 (88 aa).

It belongs to the universal ribosomal protein uS17 family. As to quaternary structure, part of the 30S ribosomal subunit.

One of the primary rRNA binding proteins, it binds specifically to the 5'-end of 16S ribosomal RNA. The sequence is that of Small ribosomal subunit protein uS17 from Oleidesulfovibrio alaskensis (strain ATCC BAA-1058 / DSM 17464 / G20) (Desulfovibrio alaskensis).